The following is a 384-amino-acid chain: Homoserine O-succinyltransferase (384 aa).

The AB hydrolase-1 domain maps to 51–361; the sequence is NAILICHALS…ETSQGHDAFL (311 aa). Serine 157 serves as the catalytic Nucleophile. A substrate-binding site is contributed by arginine 227. Catalysis depends on residues aspartate 324 and histidine 357. Aspartate 358 contacts substrate.

Belongs to the AB hydrolase superfamily. MetX family. As to quaternary structure, homodimer.

It localises to the cytoplasm. The catalysed reaction is L-homoserine + succinyl-CoA = O-succinyl-L-homoserine + CoA. The protein operates within amino-acid biosynthesis; L-methionine biosynthesis via de novo pathway; O-succinyl-L-homoserine from L-homoserine: step 1/1. Its function is as follows. Transfers a succinyl group from succinyl-CoA to L-homoserine, forming succinyl-L-homoserine. This Alkalilimnicola ehrlichii (strain ATCC BAA-1101 / DSM 17681 / MLHE-1) protein is Homoserine O-succinyltransferase.